We begin with the raw amino-acid sequence, 282 residues long: Predicted GPI-anchored protein 23 (282 aa).

An N-terminal signal peptide occupies residues 1–18 (MRVSTLVLSTSIIPIATA). A disordered region spans residues 163–264 (GQETSGAGSL…SSNSSSSAGM (102 aa)). Residues asparagine 180, asparagine 192, and asparagine 257 are each glycosylated (N-linked (GlcNAc...) asparagine). Over residues 186-216 (GGSGSSNGTSSGSGSGSGAGVGSGSGSGSGS) the composition is skewed to gly residues. The segment covering 236–264 (LGISSSISQSTTRQLQTSGSSNSSSSAGM) has biased composition (low complexity). Serine 259 carries GPI-anchor amidated serine lipidation. Residues 260–282 (SSAGMGNVVVGMNAVALAALVLI) constitute a propeptide, removed in mature form.

It is found in the cell membrane. In terms of biological role, probable cell surface protein involved in the process of adhesion and early events of invasion. The protein is Predicted GPI-anchored protein 23 (PGA23) of Candida albicans (strain SC5314 / ATCC MYA-2876) (Yeast).